The sequence spans 686 residues: Putative pentatricopeptide repeat-containing protein At3g49142 (686 aa).

PPR repeat units lie at residues 73-103, 104-138, 139-173, 174-204, 205-239, 240-272, 273-307, 308-342, 343-373, 374-408, 409-439, and 445-475; these read NSSL…IPER, NVII…NVRP, DHYT…GLSS, TLFV…MSRR, DVVS…KISH, DAGT…MGKK, SLVS…GFEP, DAVS…KLIP, NLLL…MKSR, DVVS…GLVP, DSIA…MTDH, and RLEH…MSME. The type E motif stretch occupies residues 480 to 555; that stretch reads VWGALLGACR…NPGASNVEVN (76 aa). Residues 556 to 586 form a type E(+) motif region; sequence RIIHTFLVGDRSHPQSDEIYRELDVLVKKMK. Residues 587-686 are type DYW motif; sequence ELGYVPDSES…FGVCSCGDYW (100 aa).

The protein belongs to the PPR family. PCMP-H subfamily.

The sequence is that of Putative pentatricopeptide repeat-containing protein At3g49142 (PCMP-H77) from Arabidopsis thaliana (Mouse-ear cress).